The following is a 146-amino-acid chain: 3-hydroxyacyl-[acyl-carrier-protein] dehydratase FabZ (146 aa).

His-51 is an active-site residue.

Belongs to the thioester dehydratase family. FabZ subfamily.

Its subcellular location is the cytoplasm. It catalyses the reaction a (3R)-hydroxyacyl-[ACP] = a (2E)-enoyl-[ACP] + H2O. Functionally, involved in unsaturated fatty acids biosynthesis. Catalyzes the dehydration of short chain beta-hydroxyacyl-ACPs and long chain saturated and unsaturated beta-hydroxyacyl-ACPs. The sequence is that of 3-hydroxyacyl-[acyl-carrier-protein] dehydratase FabZ from Staphylococcus aureus (strain Mu3 / ATCC 700698).